The chain runs to 104 residues: Co-chaperonin GroES 2 (104 aa).

It belongs to the GroES chaperonin family. As to quaternary structure, heptamer of 7 subunits arranged in a ring. Interacts with the chaperonin GroEL.

The protein resides in the cytoplasm. In terms of biological role, together with the chaperonin GroEL, plays an essential role in assisting protein folding. The GroEL-GroES system forms a nano-cage that allows encapsulation of the non-native substrate proteins and provides a physical environment optimized to promote and accelerate protein folding. GroES binds to the apical surface of the GroEL ring, thereby capping the opening of the GroEL channel. The protein is Co-chaperonin GroES 2 of Rhodopseudomonas palustris (strain ATCC BAA-98 / CGA009).